Consider the following 186-residue polypeptide: dCTP deaminase (186 aa).

Residue 107–112 (KSTYAR) participates in dCTP binding. Glu133 functions as the Proton donor/acceptor in the catalytic mechanism. DCTP is bound by residues Gln152, Tyr166, Lys175, and Gln176.

It belongs to the dCTP deaminase family. In terms of assembly, homotrimer.

The catalysed reaction is dCTP + H2O + H(+) = dUTP + NH4(+). It functions in the pathway pyrimidine metabolism; dUMP biosynthesis; dUMP from dCTP (dUTP route): step 1/2. Its function is as follows. Catalyzes the deamination of dCTP to dUTP. The protein is dCTP deaminase of Wolinella succinogenes (strain ATCC 29543 / DSM 1740 / CCUG 13145 / JCM 31913 / LMG 7466 / NCTC 11488 / FDC 602W) (Vibrio succinogenes).